Reading from the N-terminus, the 502-residue chain is NADH-quinone oxidoreductase subunit N (502 aa).

14 helical membrane passes run 16-36 (TLVP…IDLF), 47-67 (MLSL…AGVF), 85-105 (LAIL…PLAL), 113-133 (FSYP…QFMV), 138-158 (LILI…LIAM), 172-192 (FTMG…FYAL), 213-233 (IGFV…KLSM), 248-268 (SAAL…IVAM), 273-293 (FLIH…VVVT), 310-330 (MLAY…LIGT), 337-357 (LFLY…MLWI), 387-407 (ASIM…ALFW), 410-430 (MYLM…IMAL), and 470-490 (TIIG…NQLI).

It belongs to the complex I subunit 2 family. NDH-1 is composed of 14 different subunits. Subunits NuoA, H, J, K, L, M, N constitute the membrane sector of the complex.

The protein resides in the cell inner membrane. The catalysed reaction is a quinone + NADH + 5 H(+)(in) = a quinol + NAD(+) + 4 H(+)(out). NDH-1 shuttles electrons from NADH, via FMN and iron-sulfur (Fe-S) centers, to quinones in the respiratory chain. The immediate electron acceptor for the enzyme in this species is believed to be ubiquinone. Couples the redox reaction to proton translocation (for every two electrons transferred, four hydrogen ions are translocated across the cytoplasmic membrane), and thus conserves the redox energy in a proton gradient. The protein is NADH-quinone oxidoreductase subunit N of Sulfurimonas denitrificans (strain ATCC 33889 / DSM 1251) (Thiomicrospira denitrificans (strain ATCC 33889 / DSM 1251)).